The chain runs to 392 residues: Chaperone protein DnaJ 1 (392 aa).

The 64-residue stretch at 4 to 67 (DYYEILGVSH…QKRAVFDRGG (64 aa)) folds into the J domain. Residues 134-216 (GVTKSLEVDT…CSGEGRVRTT (83 aa)) form a CR-type zinc finger. Residues C147, C150, C164, C167, C190, C193, C204, and C207 each coordinate Zn(2+). CXXCXGXG motif repeat units lie at residues 147 to 154 (CPKCQGKG), 164 to 171 (CDTCQGRG), 190 to 197 (CPTCHGYG), and 204 to 211 (CQECSGEG). Residues 367-392 (ETNASASVEKSGGRGMFSRIKEAFGG) are disordered.

Belongs to the DnaJ family. Homodimer. Requires Zn(2+) as cofactor.

The protein resides in the cytoplasm. Functionally, participates actively in the response to hyperosmotic and heat shock by preventing the aggregation of stress-denatured proteins and by disaggregating proteins, also in an autonomous, DnaK-independent fashion. Unfolded proteins bind initially to DnaJ; upon interaction with the DnaJ-bound protein, DnaK hydrolyzes its bound ATP, resulting in the formation of a stable complex. GrpE releases ADP from DnaK; ATP binding to DnaK triggers the release of the substrate protein, thus completing the reaction cycle. Several rounds of ATP-dependent interactions between DnaJ, DnaK and GrpE are required for fully efficient folding. Also involved, together with DnaK and GrpE, in the DNA replication of plasmids through activation of initiation proteins. The sequence is that of Chaperone protein DnaJ 1 from Cutibacterium acnes (strain DSM 16379 / KPA171202) (Propionibacterium acnes).